A 277-amino-acid chain; its full sequence is MSKSLKKLVEESREKNQPEVDMSDRGISNMLDVNGLFTLSHITQLVLSHNKLTMVPPNIAELKNLEVLNFFNNQIEELPTQISSLQKLKHLNLGMNRLNTLPRGFGSLPALEVLDLTYNNLSENSLPGNFFYLTTLRALYLSDNDFEILPPDIGKLTKLQILSLRDNDLISLPKEIGELTQLKELHIQGNRLTVLPPELGNLDLTGQKQVFKAENNPWVTPIADQFQLGVSHVFEYIRSETYKYLYGRHMQANPEPPKKNNDKSKKISRKPLAAKNR.

Positions 1–24 (MSKSLKKLVEESREKNQPEVDMSD) are disordered. Position 2 is an N-acetylserine (serine 2). Residues 7–24 (KLVEESREKNQPEVDMSD) show a composition bias toward basic and acidic residues. LRR repeat units follow at residues 41 to 63 (HITQ…AELK), 64 to 85 (NLEV…ISSL), 87 to 109 (KLKH…GSLP), 110 to 133 (ALEV…FFYL), 135 to 156 (TLRA…IGKL), 158 to 179 (KLQI…IGEL), and 181 to 202 (QLKE…LGNL). Residues 250–277 (MQANPEPPKKNNDKSKKISRKPLAAKNR) form a disordered region. Basic and acidic residues predominate over residues 256 to 265 (PPKKNNDKSK).

In terms of biological role, potentially plays a role in the Ras signal transduction pathway. Capable of suppressing v-Ras transformation in vitro. The protein is Ras suppressor protein 1 (RSU1) of Homo sapiens (Human).